The primary structure comprises 148 residues: Large ribosomal subunit protein bL9 (148 aa).

It belongs to the bacterial ribosomal protein bL9 family.

Binds to the 23S rRNA. The sequence is that of Large ribosomal subunit protein bL9 from Syntrophotalea carbinolica (strain DSM 2380 / NBRC 103641 / GraBd1) (Pelobacter carbinolicus).